A 142-amino-acid chain; its full sequence is Large-conductance mechanosensitive channel (142 aa).

3 helical membrane passes run 10 to 30 (FAVK…GAFG), 40 to 60 (LIMP…LFVV), and 86 to 106 (GNFI…FMMV).

Belongs to the MscL family. In terms of assembly, homopentamer.

Its subcellular location is the cell inner membrane. Channel that opens in response to stretch forces in the membrane lipid bilayer. May participate in the regulation of osmotic pressure changes within the cell. The sequence is that of Large-conductance mechanosensitive channel from Delftia acidovorans (strain DSM 14801 / SPH-1).